The chain runs to 71 residues: Large ribosomal subunit protein bL31 (71 aa).

Zn(2+)-binding residues include Cys-16, Cys-18, Cys-37, and Cys-40.

This sequence belongs to the bacterial ribosomal protein bL31 family. Type A subfamily. Part of the 50S ribosomal subunit. Zn(2+) serves as cofactor.

In terms of biological role, binds the 23S rRNA. This is Large ribosomal subunit protein bL31 from Serratia proteamaculans (strain 568).